The chain runs to 154 residues: SsrA-binding protein (154 aa).

Positions 134 to 154 (QREDLKRRAEDRDTQRELARF) are disordered.

The protein belongs to the SmpB family.

The protein resides in the cytoplasm. In terms of biological role, required for rescue of stalled ribosomes mediated by trans-translation. Binds to transfer-messenger RNA (tmRNA), required for stable association of tmRNA with ribosomes. tmRNA and SmpB together mimic tRNA shape, replacing the anticodon stem-loop with SmpB. tmRNA is encoded by the ssrA gene; the 2 termini fold to resemble tRNA(Ala) and it encodes a 'tag peptide', a short internal open reading frame. During trans-translation Ala-aminoacylated tmRNA acts like a tRNA, entering the A-site of stalled ribosomes, displacing the stalled mRNA. The ribosome then switches to translate the ORF on the tmRNA; the nascent peptide is terminated with the 'tag peptide' encoded by the tmRNA and targeted for degradation. The ribosome is freed to recommence translation, which seems to be the essential function of trans-translation. The chain is SsrA-binding protein from Nitratidesulfovibrio vulgaris (strain ATCC 29579 / DSM 644 / CCUG 34227 / NCIMB 8303 / VKM B-1760 / Hildenborough) (Desulfovibrio vulgaris).